The primary structure comprises 153 residues: Selenoprotein F (153 aa).

Residues 1–19 (MAGEVYLLWLLPLLQGLAS) form the signal peptide. Residue Sec84 is a non-standard amino acid, selenocysteine.

The protein belongs to the selenoprotein M/F family. Higher levels in polster, prechordal plate, axis, otic vesicle and somites. Lower levels in fin buds.

The protein localises to the endoplasmic reticulum lumen. In terms of biological role, may be involved in redox reactions associated with the formation of disulfide bonds. May contribute to the quality control of protein folding in the endoplasmic reticulum. This Danio rerio (Zebrafish) protein is Selenoprotein F.